Consider the following 181-residue polypeptide: Copper-resistant cuproprotein CopI (181 aa).

A signal peptide spans 1-24; the sequence is MFPRRLLPASLIVLGVLFGASAQA. Cu(2+) is bound by residues His79, Cys163, His168, and Met173.

It belongs to the CopI family.

The protein localises to the periplasm. Its function is as follows. Involved in copper tolerance. The sequence is that of Copper-resistant cuproprotein CopI from Pseudomonas aeruginosa (strain ATCC 15692 / DSM 22644 / CIP 104116 / JCM 14847 / LMG 12228 / 1C / PRS 101 / PAO1).